The primary structure comprises 164 residues: DNA-binding protein inhibitor ID-1 (164 aa).

The bHLH domain occupies 46–98 (LPALLDEQQVNVLLYDMNGCYSRLKELVPTLPQNRKVSKVEILQHVIDYIRDL). The Nuclear export signal motif lies at 91 to 104 (VIDYIRDLQLELNS).

In terms of assembly, heterodimer with other HLH proteins. Interacts with COPS5, IFI204, GATA4, NKX2-5, CLOCK and BMAL1. Isoform Short can form homodimers. In terms of processing, phosphorylated in vitro by PKA and PKC.

The protein localises to the cytoplasm. The protein resides in the nucleus. In terms of biological role, transcriptional regulator (lacking a basic DNA binding domain) which negatively regulates the basic helix-loop-helix (bHLH) transcription factors by forming heterodimers and inhibiting their DNA binding and transcriptional activity. Implicated in regulating a variety of cellular processes, including cellular growth, senescence, differentiation, apoptosis, angiogenesis, and neoplastic transformation. Inhibits skeletal muscle and cardiac myocyte differentiation. Regulates the circadian clock by repressing the transcriptional activator activity of the CLOCK-BMAL1 heterodimer. The protein is DNA-binding protein inhibitor ID-1 (Id1) of Rattus norvegicus (Rat).